We begin with the raw amino-acid sequence, 874 residues long: S-layer protein (874 aa).

The first 30 residues, 1 to 30, serve as a signal peptide directing secretion; the sequence is MAKTNSYKKVIAGTMTAAMVAGVVSPVAAA. SLH domains are found at residues 31 to 93, 94 to 151, and 152 to 214; these read GKSF…NAQP, SFKD…KVDG, and TLVT…ENSD.

Its subcellular location is the secreted. It localises to the cell wall. The protein resides in the S-layer. In terms of biological role, the S-layer is a paracrystalline mono-layered assembly of proteins which coat the surface of bacteria. The sequence is that of S-layer protein from Bacillus licheniformis.